Reading from the N-terminus, the 347-residue chain is Ferrochelatase (347 aa).

[2Fe-2S] cluster is bound at residue cysteine 158. The Fe cation site is built by histidine 193 and glutamate 272. [2Fe-2S] cluster is bound by residues cysteine 332, cysteine 339, and cysteine 341.

Belongs to the ferrochelatase family. In terms of assembly, homodimer. The cofactor is [2Fe-2S] cluster.

It localises to the cytoplasm. It catalyses the reaction heme b + 2 H(+) = protoporphyrin IX + Fe(2+). The protein operates within porphyrin-containing compound metabolism; protoheme biosynthesis; protoheme from protoporphyrin-IX: step 1/1. Functionally, catalyzes the ferrous insertion into protoporphyrin IX. This is Ferrochelatase from Caulobacter vibrioides (strain ATCC 19089 / CIP 103742 / CB 15) (Caulobacter crescentus).